Here is a 527-residue protein sequence, read N- to C-terminus: Glucose-6-phosphate isomerase (527 aa).

The Proton donor role is filled by E323. Active-site residues include H352 and K454.

This sequence belongs to the GPI family.

The protein resides in the cytoplasm. It carries out the reaction alpha-D-glucose 6-phosphate = beta-D-fructose 6-phosphate. It participates in carbohydrate biosynthesis; gluconeogenesis. The protein operates within carbohydrate degradation; glycolysis; D-glyceraldehyde 3-phosphate and glycerone phosphate from D-glucose: step 2/4. Its function is as follows. Catalyzes the reversible isomerization of glucose-6-phosphate to fructose-6-phosphate. This Prochlorococcus marinus (strain MIT 9301) protein is Glucose-6-phosphate isomerase.